We begin with the raw amino-acid sequence, 107 residues long: Thioredoxin-1 (107 aa).

Residues 2–106 (ASVRTMNDYH…LTNMMAKLVK (105 aa)) form the Thioredoxin domain. Active-site nucleophile residues include cysteine 31 and cysteine 34. Cysteines 31 and 34 form a disulfide.

This sequence belongs to the thioredoxin family. As to expression, ovary specific. Expressed present in the nurse cells from stage 9 of ovary development and is transported into the oocyte. Expressed throughout oogenesis.

The protein resides in the nucleus. Its function is as follows. Participates in various redox reactions through the reversible oxidation of its active center dithiol to a disulfide and catalyzes dithiol-disulfide exchange reactions. As a reducing substrate of peroxiredoxin 1, thioredoxin 2 is preferred over thioredoxin 1. Required for female meiosis and early embryonic development. This Drosophila melanogaster (Fruit fly) protein is Thioredoxin-1 (dhd).